Here is a 181-residue protein sequence, read N- to C-terminus: Small ribosomal subunit protein uS4 (181 aa).

The S4 RNA-binding domain maps to R108 to E172.

Belongs to the universal ribosomal protein uS4 family. Part of the 30S ribosomal subunit. Contacts protein S5. The interaction surface between S4 and S5 is involved in control of translational fidelity.

Its function is as follows. One of the primary rRNA binding proteins, it binds directly to 16S rRNA where it nucleates assembly of the body of the 30S subunit. In terms of biological role, with S5 and S12 plays an important role in translational accuracy. The polypeptide is Small ribosomal subunit protein uS4 (Methanospirillum hungatei JF-1 (strain ATCC 27890 / DSM 864 / NBRC 100397 / JF-1)).